The primary structure comprises 196 residues: ATP-dependent Clp protease proteolytic subunit (196 aa).

Ser101 functions as the Nucleophile in the catalytic mechanism. The active site involves His126.

Belongs to the peptidase S14 family. In terms of assembly, component of the chloroplastic Clp protease core complex.

Its subcellular location is the plastid. The protein localises to the chloroplast stroma. The enzyme catalyses Hydrolysis of proteins to small peptides in the presence of ATP and magnesium. alpha-casein is the usual test substrate. In the absence of ATP, only oligopeptides shorter than five residues are hydrolyzed (such as succinyl-Leu-Tyr-|-NHMec, and Leu-Tyr-Leu-|-Tyr-Trp, in which cleavage of the -Tyr-|-Leu- and -Tyr-|-Trp bonds also occurs).. Its function is as follows. Cleaves peptides in various proteins in a process that requires ATP hydrolysis. Has a chymotrypsin-like activity. Plays a major role in the degradation of misfolded proteins. The protein is ATP-dependent Clp protease proteolytic subunit of Gossypium barbadense (Sea Island cotton).